The primary structure comprises 77 residues: U8-lycotoxin-Ls1n (77 aa).

Positions 1 to 20 (MKLMIFTGLVLFAIVSLIEA) are cleaved as a signal peptide. Positions 21–26 (QAENEK) are excised as a propeptide.

This sequence belongs to the neurotoxin 19 (CSTX) family. 08 (U8-Lctx) subfamily. Contains 4 disulfide bonds. Expressed by the venom gland.

It is found in the secreted. The protein is U8-lycotoxin-Ls1n of Lycosa singoriensis (Wolf spider).